We begin with the raw amino-acid sequence, 1013 residues long: Receptor-type tyrosine-protein phosphatase N2 (1013 aa).

The signal sequence occupies residues 1–19 (MALPLLLLLLLLLPPRVLP). The tract at residues 1-419 (MALPLLLLLL…PGALPFAKPL (419 aa)) is involved in localization to secretory granules; interaction with CPE. The Extracellular segment spans residues 20-613 (AAPSSVPHGR…QAEQEDSTKF (594 aa)). 4 disordered regions span residues 116–137 (RHPE…ERRY), 273–302 (MPRP…TGEG), 342–382 (DHRG…VQDD), and 401–487 (LQDH…SLPA). Positions 419–430 (LKMERKKSERPE) are enriched in basic and acidic residues. A phosphoserine mark is found at Ser434 and Ser435. Residue Asn562 is glycosylated (N-linked (GlcNAc...) asparagine). Residues 614–634 (IALTLVSLACILGVLLASGLI) traverse the membrane as a helical segment. At 635–1013 (YCLRHSSQHR…VNAILKALPQ (379 aa)) the chain is on the cytoplasmic side. The short motif at 664 to 673 (YQELCRQRMA) is the Tyrosine-based internalization motif element. The interval 673–717 (ATRPPDRPEGPHTSRISSVSSQFSDGPMPSPSARSSASSWSEEPV) is disordered. Polar residues predominate over residues 686–696 (SRISSVSSQFS). A phosphoserine mark is found at Ser690 and Ser696. Residues 703–717 (PSARSSASSWSEEPV) are compositionally biased toward low complexity. One can recognise a Tyrosine-protein phosphatase domain in the interval 743–1003 (LEKEWEALCA…EFALTAVAEE (261 aa)). Substrate contacts are provided by residues Asp911 and 943-949 (CSDGAGR). Catalysis depends on Cys943, which acts as the Phosphocysteine intermediate. At Lys968 the chain carries N6-acetyllysine. Gln988 serves as a coordination point for substrate. Residues 1002-1008 (EEVNAIL) carry the Leucine-based sorting signal motif.

The protein belongs to the protein-tyrosine phosphatase family. Receptor class 8 subfamily. In terms of assembly, self-associates. Interacts (via cytoplasmic domain) with PTPRN (via cytoplasmic domain). Interacts (precursor form) with CPE. Interacts with HAP1. Interacts with AP2A1 or AP2A2 and AP1G1; indicative for an association with adaptor protein complex 2 (AP-2) and adaptor protein complex 1 (AP-1). Interacts with AP2M1; indicative for an association with adaptor protein complex 2 (AP-2). Interacts with MYO5A. In terms of processing, subject to proteolytic cleavage at multiple sites. As to expression, detected in pancreatic islets and adrenal medulla.

The protein localises to the cytoplasmic vesicle. The protein resides in the secretory vesicle membrane. It is found in the secretory vesicle. Its subcellular location is the synaptic vesicle membrane. It catalyses the reaction O-phospho-L-tyrosyl-[protein] + H2O = L-tyrosyl-[protein] + phosphate. Functionally, plays a role in vesicle-mediated secretory processes. Required for normal accumulation of secretory vesicles in hippocampus, pituitary and pancreatic islets. Required for the accumulation of normal levels of insulin-containing vesicles and preventing their degradation. Plays a role in insulin secretion in response to glucose stimuli. Required for normal accumulation of the neurotransmitters norepinephrine, dopamine and serotonin in the brain. In females, but not in males, required for normal accumulation and secretion of pituitary hormones, such as luteinizing hormone (LH) and follicle-stimulating hormone (FSH). Required to maintain normal levels of renin expression and renin release. May regulate catalytic active protein-tyrosine phosphatases such as PTPRA through dimerization. Has phosphatidylinositol phosphatase activity; the PIPase activity is involved in its ability to regulate insulin secretion. Can dephosphorylate phosphatidylinositol 4,5-biphosphate, phosphatidylinositol 5-phosphate and phosphatidylinositol 3-phosphate. Regulates PI(4,5)P2 level in the plasma membrane and localization of cofilin at the plasma membrane and thus is indirectly involved in regulation of actin dynamics related to cell migration and metastasis; upon hydrolysis of PI(4,5)P2 cofilin is released from the plasma membrane and acts in the cytoplasm in severing F-actin filaments. The polypeptide is Receptor-type tyrosine-protein phosphatase N2 (PTPRN2) (Macaca nemestrina (Pig-tailed macaque)).